The chain runs to 527 residues: GMP synthase [glutamine-hydrolyzing] (527 aa).

Residues 4–202 form the Glutamine amidotransferase type-1 domain; the sequence is KILILDFGSQ…VLKICGAQPD (199 aa). Residue C81 is the Nucleophile of the active site. Catalysis depends on residues H176 and E178. A GMPS ATP-PPase domain is found at 203–395; it reads WEMGHYIDEA…LGLPPAMVYR (193 aa). An ATP-binding site is contributed by 230–236; sequence SGGVDSS.

As to quaternary structure, homodimer.

It catalyses the reaction XMP + L-glutamine + ATP + H2O = GMP + L-glutamate + AMP + diphosphate + 2 H(+). It functions in the pathway purine metabolism; GMP biosynthesis; GMP from XMP (L-Gln route): step 1/1. Catalyzes the synthesis of GMP from XMP. This chain is GMP synthase [glutamine-hydrolyzing], found in Paraburkholderia xenovorans (strain LB400).